The sequence spans 271 residues: Delta(3,5)-Delta(2,4)-dienoyl-CoA isomerase (271 aa).

Residues 62 to 66 (SGGKF) and Leu120 contribute to the substrate site. Residue Glu152 is the Proton donor/acceptor of the active site. The short motif at 269–271 (HKL) is the Peroxisome targeting signal (PTS1) element.

Belongs to the enoyl-CoA hydratase/isomerase family. As to quaternary structure, interacts with ECI1.

The protein resides in the peroxisome. It catalyses the reaction a (3E,5Z)-dienoyl-CoA = a (2E,4E)-(5,6-saturated)-dienoyl-CoA. It participates in lipid metabolism; fatty acid beta-oxidation. Functionally, peroxisomal di-isomerase that is involved in fatty acid metabolism enzyme by converting 3,5-dienoyl-CoAs to the corresponding 2,4-dienoyl-CoAs. Required for ECI1 to be located to the peroxisome. This Saccharomyces cerevisiae (strain ATCC 204508 / S288c) (Baker's yeast) protein is Delta(3,5)-Delta(2,4)-dienoyl-CoA isomerase.